A 313-amino-acid chain; its full sequence is Biotin synthase (313 aa).

The Radical SAM core domain maps to 28 to 258 (NFGNDIELCS…LFPQARLRLS (231 aa)). [4Fe-4S] cluster contacts are provided by C46, C50, and C53. Positions 90, 121, 181, and 256 each coordinate [2Fe-2S] cluster.

This sequence belongs to the radical SAM superfamily. Biotin synthase family. Homodimer. [4Fe-4S] cluster is required as a cofactor. It depends on [2Fe-2S] cluster as a cofactor.

It catalyses the reaction (4R,5S)-dethiobiotin + (sulfur carrier)-SH + 2 reduced [2Fe-2S]-[ferredoxin] + 2 S-adenosyl-L-methionine = (sulfur carrier)-H + biotin + 2 5'-deoxyadenosine + 2 L-methionine + 2 oxidized [2Fe-2S]-[ferredoxin]. The protein operates within cofactor biosynthesis; biotin biosynthesis; biotin from 7,8-diaminononanoate: step 2/2. Functionally, catalyzes the conversion of dethiobiotin (DTB) to biotin by the insertion of a sulfur atom into dethiobiotin via a radical-based mechanism. The chain is Biotin synthase from Francisella philomiragia subsp. philomiragia (strain ATCC 25017 / CCUG 19701 / FSC 153 / O#319-036).